A 267-amino-acid polypeptide reads, in one-letter code: Glutamate 5-kinase (267 aa).

Lys-15 serves as a coordination point for ATP. Residues Ser-55, Asp-142, and Asn-158 each coordinate substrate. ATP contacts are provided by residues 178–179 (SD) and 220–226 (TGGMATK).

This sequence belongs to the glutamate 5-kinase family.

The protein localises to the cytoplasm. The catalysed reaction is L-glutamate + ATP = L-glutamyl 5-phosphate + ADP. It participates in amino-acid biosynthesis; L-proline biosynthesis; L-glutamate 5-semialdehyde from L-glutamate: step 1/2. Functionally, catalyzes the transfer of a phosphate group to glutamate to form L-glutamate 5-phosphate. The protein is Glutamate 5-kinase of Ligilactobacillus salivarius (strain UCC118) (Lactobacillus salivarius).